We begin with the raw amino-acid sequence, 223 residues long: Ribonuclease 3 (223 aa).

Residues 5–127 enclose the RNase III domain; the sequence is LQRLEKKIGY…IIGAIYLDSD (123 aa). Glutamate 40 lines the Mg(2+) pocket. Aspartate 44 is an active-site residue. Mg(2+)-binding residues include aspartate 113 and glutamate 116. The active site involves glutamate 116. The DRBM domain maps to 154 to 223; the sequence is DPKTRLQEYL…AADIALGQLN (70 aa).

The protein belongs to the ribonuclease III family. In terms of assembly, homodimer. The cofactor is Mg(2+).

The protein resides in the cytoplasm. The catalysed reaction is Endonucleolytic cleavage to 5'-phosphomonoester.. In terms of biological role, digests double-stranded RNA. Involved in the processing of primary rRNA transcript to yield the immediate precursors to the large and small rRNAs (23S and 16S). Processes some mRNAs, and tRNAs when they are encoded in the rRNA operon. Processes pre-crRNA and tracrRNA of type II CRISPR loci if present in the organism. The chain is Ribonuclease 3 from Aliivibrio fischeri (strain ATCC 700601 / ES114) (Vibrio fischeri).